A 78-amino-acid chain; its full sequence is Translational regulator CsrA (78 aa).

This sequence belongs to the CsrA/RsmA family. Homodimer; the beta-strands of each monomer intercalate to form a hydrophobic core, while the alpha-helices form wings that extend away from the core.

Its subcellular location is the cytoplasm. Functionally, a translational regulator that binds mRNA to regulate translation initiation and/or mRNA stability. Usually binds in the 5'-UTR at or near the Shine-Dalgarno sequence preventing ribosome-binding, thus repressing translation. Its main target seems to be the major flagellin gene, while its function is anatagonized by FliW. In Oleidesulfovibrio alaskensis (strain ATCC BAA-1058 / DSM 17464 / G20) (Desulfovibrio alaskensis), this protein is Translational regulator CsrA.